The following is a 748-amino-acid chain: MSNPGGRRNGPVKLRLTVLCAKNLVKKDFFRLPDPFAKVVVDGSGQCHSTDTVKNTLDPKWNQHYDLYIGKSDSVTISVWNHKKIHKKQGAGFLGCVRLLSNAINRLKDTGYQRLDLCKLGPNDNDTVRGQIVVSLQSRDRIGTGGQVVDCSRLFDNDLPDGWEERRTASGRIQYLNHITRTTQWERPTRPASEYSSPGRPLSCFVDENTPITGTNGATCGHSSDPRLAERRVRSQRHRNYMSRTHLHTPPDLPEGYEQRTTQQGQVYFLHTQTGVSTWHDPRVPRDLSNINCEELGPLPPGWEIRNTATGRVYFVDHNNRTTQFTDPRLSANLHLVLNRQNQLKDQQQQQVVPLCPDDTECLTVPRYKRDLVQKLKILRQELSQQQPQAGHCRIEVSREEIFEESYRQVMKMRPKDLWKRLMIKFRGEEGLDYGGVAREWLYLLSHEMLNPYYGLFQYSRDDIYTLQINPDSAVNPEHLSYFHFVGRIMGMAVFHGHYIDGGFTLPFYKQLLGKSITLDDMELVDPDLHNSLVWILENDITGVLDHTFCVEHNAYGEIIQHELKPNGKSIPVTEENKKEYVRLYVNWRFLRGIEAQFLALQKGFNEVIPQHLLKTFDEKELELIICGLGKIDVSDWKVNTRLKHCTPDSNVVKWFWKAVEFFDEERRARLLQFVTGSSRVPLQGFKALQGAAGPRLFTIHQIDACTNNLPKAHTCFNRIDIPPYESYEKLYEKLLTAIEETCGFAVE.

The C2 domain occupies Met1 to Lys119. Residue Lys119 forms a Glycyl lysine isopeptide (Lys-Gly) (interchain with G-Cter in ubiquitin) linkage. WW domains follow at residues Asn157–Arg190, Pro251–Val284, and Gly297–Leu330. The HECT domain occupies Arg414 to Glu748. The Glycyl thioester intermediate role is filled by Cys716.

In terms of assembly, interacts (via WW domains) with SMAD1. Interacts (via WW domains) with SMAD2 (via PY-motif). Interacts (via WW domains) with SMAD3 (via PY-motif). Interacts with SMAD6. Interacts with SMAD7 (via PY-motif) and TGFBR1; SMAD7 recruits SMURF2 to the TGF-beta receptor and regulates its degradation. Does not interact with SMAD4; SMAD4 lacks a PY-motif. Interacts with AIMP1. Interacts with NDFIP1 and NDFIP2; this interaction activates the E3 ubiquitin-protein ligase. Interacts with TTC3. In terms of processing, auto-ubiquitinated and ubiquitinated in the presence of RNF11 and UBE2D1. Ubiquitinated by the SCF(FBXL15) complex and TTC3, leading to its degradation by the proteasome. 'Lys-48'-linked polyubiquitination mediated by TRAF4 at Lys-119 leads to SMURF2 proteasomal degradation.

Its subcellular location is the nucleus. The protein localises to the cytoplasm. It localises to the cell membrane. The protein resides in the membrane raft. It carries out the reaction S-ubiquitinyl-[E2 ubiquitin-conjugating enzyme]-L-cysteine + [acceptor protein]-L-lysine = [E2 ubiquitin-conjugating enzyme]-L-cysteine + N(6)-ubiquitinyl-[acceptor protein]-L-lysine.. It functions in the pathway protein modification; protein ubiquitination. Activated by NDFIP1- and NDFIP2-binding. Its function is as follows. E3 ubiquitin-protein ligase which accepts ubiquitin from an E2 ubiquitin-conjugating enzyme in the form of a thioester and then directly transfers the ubiquitin to targeted substrates. Interacts with SMAD7 to trigger SMAD7-mediated transforming growth factor beta/TGF-beta receptor ubiquitin-dependent degradation, thereby down-regulating TGF-beta signaling. In addition, interaction with SMAD7 activates autocatalytic degradation, which is prevented by interaction with AIMP1. Also forms a stable complex with TGF-beta receptor-mediated phosphorylated SMAD1, SMAD2 and SMAD3, and targets SMAD1 and SMAD2 for ubiquitination and proteasome-mediated degradation. SMAD2 may recruit substrates, such as SNON, for ubiquitin-dependent degradation. Negatively regulates TGFB1-induced epithelial-mesenchymal transition and myofibroblast differentiation. This Mus musculus (Mouse) protein is E3 ubiquitin-protein ligase SMURF2.